The chain runs to 257 residues: Phosphonates import ATP-binding protein PhnC (257 aa).

The ABC transporter domain maps to isoleucine 4–isoleucine 248. Residue glycine 37 to serine 44 participates in ATP binding.

The protein belongs to the ABC transporter superfamily. Phosphonates importer (TC 3.A.1.9.1) family. In terms of assembly, the complex is composed of two ATP-binding proteins (PhnC), two transmembrane proteins (PhnE) and a solute-binding protein (PhnD).

The protein resides in the cell membrane. It catalyses the reaction phosphonate(out) + ATP + H2O = phosphonate(in) + ADP + phosphate + H(+). Functionally, part of the ABC transporter complex PhnCDE involved in phosphonates import. Responsible for energy coupling to the transport system. This chain is Phosphonates import ATP-binding protein PhnC, found in Staphylococcus saprophyticus subsp. saprophyticus (strain ATCC 15305 / DSM 20229 / NCIMB 8711 / NCTC 7292 / S-41).